The sequence spans 229 residues: Ferric nitrobindin-like protein (229 aa).

Positions 1–54 are disordered; that stretch reads MSENSTPNNPVVPGAGADGPSLSDSASISGSDAVNLAAEQSKSTAHRNIPGLGD. The span at 18-33 shows a compositional bias: low complexity; that stretch reads DGPSLSDSASISGSDA. Positions 82 to 88 match the GXWXGXG motif; it reads GVWRGEG.

It belongs to the nitrobindin family.

This Corynebacterium glutamicum (strain R) protein is Ferric nitrobindin-like protein.